The following is a 269-amino-acid chain: Undecaprenyl-diphosphatase (269 aa).

Helical transmembrane passes span 40–59, 87–107, 116–136, 160–180, 188–208, 220–240, and 247–267; these read GITF…ALYF, WYII…EEPI, AIIA…DTLG, ALLP…FLGF, FSFL…VGHL, PLLI…ALLL, and SLYP…LFIF.

It belongs to the UppP family.

Its subcellular location is the cell inner membrane. It catalyses the reaction di-trans,octa-cis-undecaprenyl diphosphate + H2O = di-trans,octa-cis-undecaprenyl phosphate + phosphate + H(+). Catalyzes the dephosphorylation of undecaprenyl diphosphate (UPP). Confers resistance to bacitracin. The chain is Undecaprenyl-diphosphatase from Geobacter metallireducens (strain ATCC 53774 / DSM 7210 / GS-15).